Here is a 572-residue protein sequence, read N- to C-terminus: Arginine--tRNA ligase (572 aa).

Positions 122–132 (PNLAKEMHVGH) match the 'HIGH' region motif.

The protein belongs to the class-I aminoacyl-tRNA synthetase family. Monomer.

It is found in the cytoplasm. It carries out the reaction tRNA(Arg) + L-arginine + ATP = L-arginyl-tRNA(Arg) + AMP + diphosphate. The sequence is that of Arginine--tRNA ligase from Neisseria meningitidis serogroup C / serotype 2a (strain ATCC 700532 / DSM 15464 / FAM18).